We begin with the raw amino-acid sequence, 321 residues long: Anthranilate phosphoribosyltransferase (321 aa).

Residues Gly-72, 75-76 (GD), Thr-80, 82-85 (NVST), 99-107 (KHGNVSITS), and Ser-111 contribute to the 5-phospho-alpha-D-ribose 1-diphosphate site. Gly-72 is a binding site for anthranilate. Residue Ser-84 participates in Mg(2+) binding. An anthranilate-binding site is contributed by Asn-102. Arg-157 provides a ligand contact to anthranilate. Mg(2+) is bound by residues Asp-216 and Glu-217.

Belongs to the anthranilate phosphoribosyltransferase family. In terms of assembly, homodimer. Mg(2+) is required as a cofactor.

It catalyses the reaction N-(5-phospho-beta-D-ribosyl)anthranilate + diphosphate = 5-phospho-alpha-D-ribose 1-diphosphate + anthranilate. It functions in the pathway amino-acid biosynthesis; L-tryptophan biosynthesis; L-tryptophan from chorismate: step 2/5. Its function is as follows. Catalyzes the transfer of the phosphoribosyl group of 5-phosphorylribose-1-pyrophosphate (PRPP) to anthranilate to yield N-(5'-phosphoribosyl)-anthranilate (PRA). The polypeptide is Anthranilate phosphoribosyltransferase (Methanococcus maripaludis (strain C5 / ATCC BAA-1333)).